Here is a 457-residue protein sequence, read N- to C-terminus: Argininosuccinate lyase (457 aa).

The protein belongs to the lyase 1 family. Argininosuccinate lyase subfamily.

Its subcellular location is the cytoplasm. The catalysed reaction is 2-(N(omega)-L-arginino)succinate = fumarate + L-arginine. It functions in the pathway amino-acid biosynthesis; L-arginine biosynthesis; L-arginine from L-ornithine and carbamoyl phosphate: step 3/3. The chain is Argininosuccinate lyase from Klebsiella pneumoniae (strain 342).